The chain runs to 144 residues: Large ribosomal subunit protein uL15 (144 aa).

The segment at 1-54 is disordered; it reads MKLNTIKPAEGAKHARRRVGRGIGSGLGKTGGRGHKGQKSRAGGFHKVGFEGGQ. A compositionally biased stretch (gly residues) spans 21-31; that stretch reads RGIGSGLGKTG.

This sequence belongs to the universal ribosomal protein uL15 family. As to quaternary structure, part of the 50S ribosomal subunit.

Binds to the 23S rRNA. The protein is Large ribosomal subunit protein uL15 of Methylobacillus flagellatus (strain ATCC 51484 / DSM 6875 / VKM B-1610 / KT).